The sequence spans 428 residues: Glutamine synthetase, chloroplastic (428 aa).

The transit peptide at 1–48 (MAQAVVPAMQCQVGAVRARPAAAAAAAGGRVWGVRRTGRGTSGFRVMA) directs the protein to the chloroplast. Residues 75-155 (IIAEYIWVGG…VMCDTYTPAG (81 aa)) enclose the GS beta-grasp domain. The tract at residues 95–120 (TISKPVEDPSELPKWNYDGSSTGQAP) is disordered. The 270-residue stretch at 159–428 (PTNKRNRAAQ…LAAKKLALKV (270 aa)) folds into the GS catalytic domain.

It belongs to the glutamine synthetase family. As to quaternary structure, homooctamer.

The protein resides in the plastid. It is found in the chloroplast. It carries out the reaction L-glutamate + NH4(+) + ATP = L-glutamine + ADP + phosphate + H(+). Light-modulated chloroplastic glutamine synthetase, encoded by a nuclear gene and expressed primarily in leaves, and which is responsible for the reassimilation of the ammonia generated by photorespiration. This is Glutamine synthetase, chloroplastic from Oryza sativa subsp. japonica (Rice).